The sequence spans 356 residues: Cyclin-D4-1 (356 aa).

Belongs to the cyclin family. Cyclin D subfamily.

This Oryza sativa subsp. japonica (Rice) protein is Cyclin-D4-1 (CYCD4-1).